The primary structure comprises 188 residues: MLVIAGLGNPGKNYENTRHNVGFMVIDQLAKEWNIELNQNKFNGLYGTGFVSGKKVLLVKPLTYMNLSGECLRPLMDYYDVDNEDLTVIYDDLDLPTGKIRLRTKGSAGGHNGIKSLIQHLGTSEFDRIRIGIGRPVNGMKVVDYVLGSFTKEEAPEIEEAVDKSVKACEASLSKPFLEVMNEFNAKV.

Tyrosine 14 contributes to the tRNA binding site. Residue histidine 19 is the Proton acceptor of the active site. Tyrosine 64, asparagine 66, and asparagine 112 together coordinate tRNA.

Belongs to the PTH family. As to quaternary structure, monomer.

It is found in the cytoplasm. It catalyses the reaction an N-acyl-L-alpha-aminoacyl-tRNA + H2O = an N-acyl-L-amino acid + a tRNA + H(+). Hydrolyzes ribosome-free peptidyl-tRNAs (with 1 or more amino acids incorporated), which drop off the ribosome during protein synthesis, or as a result of ribosome stalling. Functionally, catalyzes the release of premature peptidyl moieties from peptidyl-tRNA molecules trapped in stalled 50S ribosomal subunits, and thus maintains levels of free tRNAs and 50S ribosomes. Releases Ala-tailed nascent peptides from stalled 50S ribosomal subunits. Non-templated Ala tailing occurs as part of the ribosome quality control (RQC) pathway. In the absence of Ala tails significantly less peptide release occurs. The Ala tail facilitates the interaction of Pth with the nascent peptide-tRNA ester bond as well as promoting nascent chain degradation; 3 Ala residues suffice to stimulate peptide release from stalled 50S ribosomal subunits. Complements a temperature-sensitive pth mutation in E.coli. This Bacillus subtilis (strain 168) protein is Peptidyl-tRNA hydrolase.